The following is a 268-amino-acid chain: Phosphatidylglycerol--prolipoprotein diacylglyceryl transferase (268 aa).

Helical transmembrane passes span 14-34 (LGPIKIHWYGLMYLLGIFAGW), 57-77 (LTFYVALGVILGGRIGYIIFY), 90-110 (FFLWDGGMSFHGGFIGVLIAF), and 117-137 (IGANFFDLGEFVAPVIPIGLG). Arginine 140 is an a 1,2-diacyl-sn-glycero-3-phospho-(1'-sn-glycerol) binding site. 3 helical membrane passes run 174–194 (QLFEFFFEGVVLFSVLWLVTI), 200–220 (YLVLGLFMFLYGYARFICEFF), and 238–258 (GQILSIPMILLGAVILIAVFI).

The protein belongs to the Lgt family.

The protein resides in the cell inner membrane. The enzyme catalyses L-cysteinyl-[prolipoprotein] + a 1,2-diacyl-sn-glycero-3-phospho-(1'-sn-glycerol) = an S-1,2-diacyl-sn-glyceryl-L-cysteinyl-[prolipoprotein] + sn-glycerol 1-phosphate + H(+). The protein operates within protein modification; lipoprotein biosynthesis (diacylglyceryl transfer). Functionally, catalyzes the transfer of the diacylglyceryl group from phosphatidylglycerol to the sulfhydryl group of the N-terminal cysteine of a prolipoprotein, the first step in the formation of mature lipoproteins. In Francisella tularensis subsp. holarctica (strain FTNF002-00 / FTA), this protein is Phosphatidylglycerol--prolipoprotein diacylglyceryl transferase.